We begin with the raw amino-acid sequence, 370 residues long: Queuine tRNA-ribosyltransferase (370 aa).

D89 functions as the Proton acceptor in the catalytic mechanism. Substrate is bound by residues 89–93, D143, Q185, and G212; that span reads DSGGF. An RNA binding region spans residues 243-249; that stretch reads GVGKPED. Residue D262 is the Nucleophile of the active site. Residues 267-271 are RNA binding; important for wobble base 34 recognition; sequence TRNAR. Residues C300, C302, C305, and H331 each coordinate Zn(2+).

It belongs to the queuine tRNA-ribosyltransferase family. As to quaternary structure, homodimer. Within each dimer, one monomer is responsible for RNA recognition and catalysis, while the other monomer binds to the replacement base PreQ1. The cofactor is Zn(2+).

It catalyses the reaction 7-aminomethyl-7-carbaguanine + guanosine(34) in tRNA = 7-aminomethyl-7-carbaguanosine(34) in tRNA + guanine. It participates in tRNA modification; tRNA-queuosine biosynthesis. Functionally, catalyzes the base-exchange of a guanine (G) residue with the queuine precursor 7-aminomethyl-7-deazaguanine (PreQ1) at position 34 (anticodon wobble position) in tRNAs with GU(N) anticodons (tRNA-Asp, -Asn, -His and -Tyr). Catalysis occurs through a double-displacement mechanism. The nucleophile active site attacks the C1' of nucleotide 34 to detach the guanine base from the RNA, forming a covalent enzyme-RNA intermediate. The proton acceptor active site deprotonates the incoming PreQ1, allowing a nucleophilic attack on the C1' of the ribose to form the product. After dissociation, two additional enzymatic reactions on the tRNA convert PreQ1 to queuine (Q), resulting in the hypermodified nucleoside queuosine (7-(((4,5-cis-dihydroxy-2-cyclopenten-1-yl)amino)methyl)-7-deazaguanosine). This is Queuine tRNA-ribosyltransferase from Hydrogenovibrio crunogenus (strain DSM 25203 / XCL-2) (Thiomicrospira crunogena).